A 154-amino-acid chain; its full sequence is Large ribosomal subunit protein uL15 (154 aa).

Residues 1-13 (MKLHELKPAEGSR) are compositionally biased toward basic and acidic residues. Residues 1-52 (MKLHELKPAEGSRKNRKRVGRGPGGTDKTAGRGHKGQKSRSGAGKGSFFEGG) form a disordered region.

It belongs to the universal ribosomal protein uL15 family. In terms of assembly, part of the 50S ribosomal subunit.

Its function is as follows. Binds to the 23S rRNA. This chain is Large ribosomal subunit protein uL15, found in Deinococcus deserti (strain DSM 17065 / CIP 109153 / LMG 22923 / VCD115).